The sequence spans 368 residues: Ferredoxin--NADP reductase (368 aa).

FAD contacts are provided by Asp56, Gln64, Tyr69, Val109, Phe144, Asp310, and Thr351.

This sequence belongs to the ferredoxin--NADP reductase type 2 family. Homodimer. The cofactor is FAD.

It carries out the reaction 2 reduced [2Fe-2S]-[ferredoxin] + NADP(+) + H(+) = 2 oxidized [2Fe-2S]-[ferredoxin] + NADPH. This Leptothrix cholodnii (strain ATCC 51168 / LMG 8142 / SP-6) (Leptothrix discophora (strain SP-6)) protein is Ferredoxin--NADP reductase.